The primary structure comprises 362 residues: Histidinol-phosphate aminotransferase (362 aa).

Lys-218 bears the N6-(pyridoxal phosphate)lysine mark.

It belongs to the class-II pyridoxal-phosphate-dependent aminotransferase family. Histidinol-phosphate aminotransferase subfamily. Homodimer. It depends on pyridoxal 5'-phosphate as a cofactor.

It catalyses the reaction L-histidinol phosphate + 2-oxoglutarate = 3-(imidazol-4-yl)-2-oxopropyl phosphate + L-glutamate. It functions in the pathway amino-acid biosynthesis; L-histidine biosynthesis; L-histidine from 5-phospho-alpha-D-ribose 1-diphosphate: step 7/9. The sequence is that of Histidinol-phosphate aminotransferase from Xanthomonas campestris pv. campestris (strain ATCC 33913 / DSM 3586 / NCPPB 528 / LMG 568 / P 25).